A 204-amino-acid chain; its full sequence is High mobility group-T protein (204 aa).

2 consecutive DNA-binding regions (HMG box) follow at residues 8 to 78 and 94 to 162; these read PRGK…RSYI and PKRP…TAYR. Residues 162–204 form a disordered region; it reads RNKGKVPVSMPAKAAAPAKDDDDDDDDDDDDEDDDDDDDEDDE. Over residues 181-204 the composition is skewed to acidic residues; the sequence is DDDDDDDDDDDDEDDDDDDDEDDE.

Belongs to the HMGB family.

The protein localises to the nucleus. It localises to the chromosome. Its function is as follows. Binds preferentially single-stranded DNA and unwinds double-stranded DNA. The chain is High mobility group-T protein from Oncorhynchus mykiss (Rainbow trout).